Here is a 147-residue protein sequence, read N- to C-terminus: F420H(2)-dependent reductase Rv1155 (147 aa).

Coenzyme F420-(gamma-Glu)n contacts are provided by residues glutamine 32, glutamine 37, serine 50, 56 to 60, 77 to 79, and histidine 138; these read AKTRN and WSY.

The protein belongs to the F420H(2)-dependent biliverdin reductase family. In terms of assembly, homodimer.

In terms of biological role, F420H(2)-dependent reductase able to catalyze the reduction of biliverdin-IXalpha to bilirubin-IXalpha in vitro. However, kinetic parameters show that it is less efficient than the biliverdin reductase Rv2074 and suggest biliverdin-IXalpha is unlikely to be the native substrate of Rv1155, which probably catalyzes the reduction of an alternative molecule in vivo. Binds coenzyme F420, but does not bind FMN or other flavins. Cannot use pyridoxine 5'-phosphate, pyridoxamine 5'-phosphate, pyridoxal 5'-phosphate (PLP), the anti-tuberculosis drug PA-824 or aflatoxin analogs as substrates. This Mycobacterium tuberculosis (strain ATCC 25618 / H37Rv) protein is F420H(2)-dependent reductase Rv1155.